A 571-amino-acid polypeptide reads, in one-letter code: Origin recognition complex subunit 5 (571 aa).

Disordered stretches follow at residues 90–142 and 404–430; these read DDEY…YDDD and QIYP…GRQL. 2 stretches are compositionally biased toward low complexity: residues 107–133 and 407–416; these read NNNN…NNND and PPQQVPQQQK. A compositionally biased stretch (basic and acidic residues) spans 417–428; sequence QQEKEKEKEKGR.

The protein belongs to the ORC1 family. In terms of assembly, ORC is composed of six subunits.

The protein localises to the nucleus. Functionally, component of the origin recognition complex (ORC) that binds origins of replication. DNA-binding is ATP-dependent, however specific DNA sequences that define origins of replication have not been identified so far. ORC is required to assemble the pre-replication complex necessary to initiate DNA replication. This Dictyostelium discoideum (Social amoeba) protein is Origin recognition complex subunit 5 (orcE).